The following is a 354-amino-acid chain: Virulence plasmid protein pGP2-D (354 aa).

The chain is Virulence plasmid protein pGP2-D from Chlamydia trachomatis serovar L2 (strain ATCC VR-902B / DSM 19102 / 434/Bu).